Here is a 479-residue protein sequence, read N- to C-terminus: Poly(A) polymerase catalytic subunit (479 aa).

Active-site residues include D202 and D204. 3 residues coordinate Ca(2+): D202, D204, and D253.

The protein belongs to the poxviridae poly(A) polymerase catalytic subunit family. In terms of assembly, heterodimer of a large (catalytic) subunit and a small (regulatory) subunit.

The catalysed reaction is RNA(n) + ATP = RNA(n)-3'-adenine ribonucleotide + diphosphate. In terms of biological role, polymerase that creates the 3'-poly(A) tail of mRNA's. The polypeptide is Poly(A) polymerase catalytic subunit (OPG063) (Bos taurus (Bovine)).